The primary structure comprises 667 residues: DNA ligase (667 aa).

NAD(+)-binding positions include 34-38 (DQEYD), 83-84 (SL), and Glu114. Lys116 (N6-AMP-lysine intermediate) is an active-site residue. Arg137, Glu170, Lys286, and Lys310 together coordinate NAD(+). Zn(2+) is bound by residues Cys404, Cys407, Cys422, and Cys427. The BRCT domain maps to 588–667 (HLAQKFENYR…EFQQLLSKED (80 aa)).

Belongs to the NAD-dependent DNA ligase family. LigA subfamily. Mg(2+) serves as cofactor. Requires Mn(2+) as cofactor.

It catalyses the reaction NAD(+) + (deoxyribonucleotide)n-3'-hydroxyl + 5'-phospho-(deoxyribonucleotide)m = (deoxyribonucleotide)n+m + AMP + beta-nicotinamide D-nucleotide.. Functionally, DNA ligase that catalyzes the formation of phosphodiester linkages between 5'-phosphoryl and 3'-hydroxyl groups in double-stranded DNA using NAD as a coenzyme and as the energy source for the reaction. It is essential for DNA replication and repair of damaged DNA. The sequence is that of DNA ligase from Spiroplasma citri.